The chain runs to 398 residues: L-glutamine--4-(methylsulfanyl)-2-oxobutanoate aminotransferase (398 aa).

The residue at position 240 (K240) is an N6-(pyridoxal phosphate)lysine.

The protein belongs to the class-I pyridoxal-phosphate-dependent aminotransferase family. MtnE subfamily. It depends on pyridoxal 5'-phosphate as a cofactor.

It catalyses the reaction 4-methylsulfanyl-2-oxobutanoate + L-glutamine = 2-oxoglutaramate + L-methionine. Its pathway is amino-acid biosynthesis; L-methionine biosynthesis via salvage pathway; L-methionine from S-methyl-5-thio-alpha-D-ribose 1-phosphate: step 6/6. Functionally, involved in the methylthioribose (MTR) recycling pathway. Catalyzes the formation of methionine from 2-keto-4-methylthiobutyrate (KMTB). The protein is L-glutamine--4-(methylsulfanyl)-2-oxobutanoate aminotransferase of Bacillus subtilis (strain 168).